An 81-amino-acid chain; its full sequence is Putative snRNP Sm-like protein (81 aa).

A Sm domain is found at 13 to 81 (RPLDALGNSL…RGDNIVYISP (69 aa)).

It belongs to the snRNP Sm proteins family.

The sequence is that of Putative snRNP Sm-like protein from Methanothermobacter thermautotrophicus (strain ATCC 29096 / DSM 1053 / JCM 10044 / NBRC 100330 / Delta H) (Methanobacterium thermoautotrophicum).